The primary structure comprises 328 residues: Diacetylchitobiose uptake system permease protein DasB (328 aa).

A disordered region spans residues 1 to 27; sequence MTVQTERPPSGPSDVRKADGGGTGGTR. 6 helical membrane-spanning segments follow: residues 36-56, 104-124, 134-154, 188-208, 247-267, and 297-317; these read ALAPYLLLLPAAAATVLLLGW, IIFTAVNVVLTMVVGGLIGLL, FVLMIGLVLAWAMPVVAATTV, FSTFFVVTVLIVWMSVPFVAI, FLYATTFLEVIWIFKAFVQVY, and MGAAIAVLTILILLGLTAYYL. Residues 100 to 316 form the ABC transmembrane type-1 domain; it reads TVRSIIFTAV…LILLGLTAYY (217 aa).

This sequence belongs to the binding-protein-dependent transport system permease family. In terms of assembly, the complex is composed of two ATP-binding proteins (MsiK), two transmembrane proteins (DasB and DasC) and a solute-binding protein (DasA).

The protein resides in the cell membrane. Part of the ABC transporter complex DasABC-MsiK involved in N,N'-diacetylchitobiose ((GlcNAc)2) uptake. Responsible for the translocation of the substrate across the membrane. This chain is Diacetylchitobiose uptake system permease protein DasB, found in Streptomyces coelicolor (strain ATCC BAA-471 / A3(2) / M145).